The sequence spans 523 residues: Uridylate cyclase (523 aa).

2 consecutive Guanylate cyclase domains span residues 69-209 (VHVY…AKLA) and 318-438 (MSIF…IGIR). The a ribonucleoside 5'-triphosphate site is built by Y72 and R125. Residues D323, I324, and D372 each contribute to the Mn(2+) site.

Belongs to the adenylyl cyclase class-4/guanylyl cyclase family. Pyrimidine cyclase subfamily. In terms of assembly, monomer. Requires Mn(2+) as cofactor.

The protein resides in the cytoplasm. The enzyme catalyses UTP = 3',5'-cyclic UMP + diphosphate. Its function is as follows. Pycsar (pyrimidine cyclase system for antiphage resistance) provides immunity against bacteriophage. The pyrimidine cyclase (PycC) synthesizes cyclic nucleotides in response to infection; these serve as specific second messenger signals. The signals activate the nearby effector, leading to bacterial cell death and abortive phage infection. A clade A Pycsar system. Functionally, the pyrimidine cyclase gene of a two-gene Pycsar system, generates cyclic UMP (cUMP) from UTP, has little to no activity on ATP, CTP or GTP. Expression of this and effector RsPycTM (AC A0A4R2UGS4) probably confers resistance to some bacteriophage. The genes are probably only expressed in response to bacteriophage infection. This Rhizobium sp. (strain PP-F2F-G36) protein is Uridylate cyclase.